Reading from the N-terminus, the 65-residue chain is Large ribosomal subunit protein uL29 (65 aa).

The protein belongs to the universal ribosomal protein uL29 family.

The sequence is that of Large ribosomal subunit protein uL29 from Leptothrix cholodnii (strain ATCC 51168 / LMG 8142 / SP-6) (Leptothrix discophora (strain SP-6)).